We begin with the raw amino-acid sequence, 133 residues long: Putative elongation factor 1-delta-like protein (133 aa).

Residues 58-73 (SLAGSLGPGASSGPSG) show a composition bias toward low complexity. Disordered stretches follow at residues 58–77 (SLAG…DHSE) and 89–133 (NQRD…TSRG). Basic and acidic residues predominate over residues 89 to 102 (NQRDLAERAGEELA).

It belongs to the EF-1-beta/EF-1-delta family.

This is Putative elongation factor 1-delta-like protein (EEF1DP3) from Homo sapiens (Human).